The chain runs to 112 residues: CLAVATA3/ESR (CLE)-related protein 44 (112 aa).

The signal sequence occupies residues 1–39 (MATTIDQTSIKSLHFHQVIRLIITIIFLAFLFLIGPTSS). The tract at residues 41-112 (NHHLHESSSK…VPSGPNPISN (72 aa)) is disordered. Over residues 62 to 71 (QPSTPSSSTM) the composition is skewed to polar residues. 2 positions are modified to hydroxyproline: P104 and P107. P107 is a glycosylation site (O-linked (Ara...) hydroxyproline).

Belongs to the CLV3/ESR signal peptide family. Interacts specifically with the leucine-rich repeat receptor-like protein kinase TDR, especially in the presence of SERK2. The O-glycosylation (arabinosylation) of the hydroxyproline Pro-107 enhances binding affinity of the CLE44p peptide for its receptor. As to expression, mostly expressed in flowers and leaves. Widely expressed along the vascular strands. In roots and hypocotyls, present in endodermal cells as well as cells in the phloem and the adjacent pericycle.

It is found in the secreted. It localises to the extracellular space. Its function is as follows. Extracellular signal peptide that regulates cell fate. May act with TDR as a ligand-receptor pair in a signal transduction pathway that represses tracheary element differentiation but promotes the formation of procambial cells adjacent to phloem cells in the veins. Regulates the transition of protophloem cells from proliferation to differentiation, thus impinging on postembryonic growth capacity of the root meristem; this signaling pathway requires CRN and CLV2. The polypeptide is CLAVATA3/ESR (CLE)-related protein 44 (Arabidopsis thaliana (Mouse-ear cress)).